The sequence spans 333 residues: MARLRLLIGLIFCLAISLDSVLSAPVISQISKDVVASVGDSVEFNCTVEEVGQLSVSWAKRPSESDTNSVVLSMRNILSLPDQRYNVTVTEGPKTGSAIYTFRIQNIEVSDMGPYECQVLVSATEKVTKKLSLQIKTPPVIAENTPKSTLVTEGQNLELTCHANGFPKPTISWAREHNAVMPAGGHLLAEPTLRIRSVHRMDRGGYYCIAQNGEGQPDKRLIRVEVEFRPQIAVQRPKIAQMVSHSAELECSVQGYPAPTVVWHKNGVPLQSSRHHEVANTASSSGTTTSVLRIDSVGEEDFGDYYCNATNKLGHADARLHLFQTVIPVPSLS.

A signal peptide spans 1–23 (MARLRLLIGLIFCLAISLDSVLS). Residues 25–128 (PVISQISKDV…VLVSATEKVT (104 aa)) enclose the Ig-like V-type domain. Asn-45 and Asn-86 each carry an N-linked (GlcNAc...) asparagine glycan. Cystine bridges form between Cys-46–Cys-117, Cys-161–Cys-208, and Cys-251–Cys-307. Ig-like C2-type domains are found at residues 139 to 223 (PVIA…RLIR) and 230 to 323 (PQIA…LHLF). Asn-308 carries an N-linked (GlcNAc...) asparagine glycan.

It is found in the cell membrane. This is Protein amalgam (Ama) from Drosophila melanogaster (Fruit fly).